We begin with the raw amino-acid sequence, 286 residues long: 33 kDa chaperonin (286 aa).

2 disulfides stabilise this stretch: Cys225–Cys227 and Cys258–Cys261.

Belongs to the HSP33 family. Under oxidizing conditions two disulfide bonds are formed involving the reactive cysteines. Under reducing conditions zinc is bound to the reactive cysteines and the protein is inactive.

It localises to the cytoplasm. Redox regulated molecular chaperone. Protects both thermally unfolding and oxidatively damaged proteins from irreversible aggregation. Plays an important role in the bacterial defense system toward oxidative stress. The polypeptide is 33 kDa chaperonin (Shewanella frigidimarina (strain NCIMB 400)).